Here is a 168-residue protein sequence, read N- to C-terminus: uncharacterized protein (168 aa).

Disordered regions lie at residues 1–35, 48–97, and 126–168; these read MGSS…KKLD, KVKK…DKGN, and ASIT…GLGM. Residues 29–95 are a coiled coil; sequence KEKKKLDEKE…KNSLSRSQDK (67 aa). Positions 68–85 are enriched in basic and acidic residues; the sequence is LAEDPMVKNVAENDHDQM. Over residues 126 to 139 the composition is skewed to polar residues; it reads ASITESSPSAQSNK. Basic and acidic residues predominate over residues 140–150; sequence TNDKQREKELE. The segment covering 157 to 168 has biased composition (basic residues); sequence VLHKGTKKGLGM.

This is an uncharacterized protein from Schizosaccharomyces pombe (strain 972 / ATCC 24843) (Fission yeast).